Reading from the N-terminus, the 116-residue chain is Class I hydrophobin 1 (116 aa).

The N-terminal stretch at 1–19 (MLFKQAILVATTLTTLAVA) is a signal peptide. 4 disulfides stabilise this stretch: C35-C95, C42-C89, C43-C76, and C96-C109. N-linked (GlcNAc...) asparagine glycans are attached at residues N44 and N100.

Belongs to the fungal hydrophobin family. As to quaternary structure, self-assembles to form functional amyloid fibrils called rodlets. Self-assembly into fibrillar rodlets occurs spontaneously at hydrophobic:hydrophilic interfaces and the rodlets further associate laterally to form amphipathic monolayers.

The protein localises to the secreted. The protein resides in the cell wall. Functionally, aerial growth, conidiation, and dispersal of filamentous fungi in the environment rely upon a capability of their secreting small amphipathic proteins called hydrophobins (HPBs) with low sequence identity. Class I can self-assemble into an outermost layer of rodlet bundles on aerial cell surfaces, conferring cellular hydrophobicity that supports fungal growth, development and dispersal; whereas Class II form highly ordered films at water-air interfaces through intermolecular interactions but contribute nothing to the rodlet structure. This chain is Class I hydrophobin 1, found in Pleurotus ostreatus (strain PC15) (Oyster mushroom).